A 182-amino-acid polypeptide reads, in one-letter code: UPF0397 protein BCA_2731 (182 aa).

Transmembrane regions (helical) follow at residues 9–29 (VVAI…GFSI), 40–60 (AILT…IGLI), 71–91 (WGIW…MGLI), 114–134 (ITGL…DIIV), and 142–162 (IVIQ…VLGL).

This sequence belongs to the UPF0397 family.

Its subcellular location is the cell membrane. The chain is UPF0397 protein BCA_2731 from Bacillus cereus (strain 03BB102).